A 302-amino-acid chain; its full sequence is Aspartate carbamoyltransferase catalytic subunit (302 aa).

Carbamoyl phosphate is bound by residues arginine 53 and threonine 54. An L-aspartate-binding site is contributed by lysine 82. Carbamoyl phosphate is bound by residues arginine 103, histidine 131, and glutamine 134. L-aspartate is bound by residues arginine 164 and arginine 223. The carbamoyl phosphate site is built by leucine 260 and proline 261.

Belongs to the aspartate/ornithine carbamoyltransferase superfamily. ATCase family. In terms of assembly, heterooligomer of catalytic and regulatory chains.

The catalysed reaction is carbamoyl phosphate + L-aspartate = N-carbamoyl-L-aspartate + phosphate + H(+). It functions in the pathway pyrimidine metabolism; UMP biosynthesis via de novo pathway; (S)-dihydroorotate from bicarbonate: step 2/3. Catalyzes the condensation of carbamoyl phosphate and aspartate to form carbamoyl aspartate and inorganic phosphate, the committed step in the de novo pyrimidine nucleotide biosynthesis pathway. This is Aspartate carbamoyltransferase catalytic subunit from Methanococcus vannielii (strain ATCC 35089 / DSM 1224 / JCM 13029 / OCM 148 / SB).